A 118-amino-acid polypeptide reads, in one-letter code: Large ribosomal subunit protein bL20 (118 aa).

Belongs to the bacterial ribosomal protein bL20 family.

Functionally, binds directly to 23S ribosomal RNA and is necessary for the in vitro assembly process of the 50S ribosomal subunit. It is not involved in the protein synthesizing functions of that subunit. This Enterobacter sp. (strain 638) protein is Large ribosomal subunit protein bL20.